We begin with the raw amino-acid sequence, 75 residues long: Small ribosomal subunit protein bS18 (75 aa).

This sequence belongs to the bacterial ribosomal protein bS18 family. Part of the 30S ribosomal subunit. Forms a tight heterodimer with protein bS6.

Binds as a heterodimer with protein bS6 to the central domain of the 16S rRNA, where it helps stabilize the platform of the 30S subunit. The sequence is that of Small ribosomal subunit protein bS18 from Psychromonas ingrahamii (strain DSM 17664 / CCUG 51855 / 37).